We begin with the raw amino-acid sequence, 100 residues long: NADH-quinone oxidoreductase subunit K (100 aa).

Transmembrane regions (helical) follow at residues 4–24 (LSWY…GFVI), 29–49 (IVML…FASF), and 60–80 (IFVL…LAIV).

It belongs to the complex I subunit 4L family. As to quaternary structure, NDH-1 is composed of 14 different subunits. Subunits NuoA, H, J, K, L, M, N constitute the membrane sector of the complex.

It is found in the cell inner membrane. The catalysed reaction is a quinone + NADH + 5 H(+)(in) = a quinol + NAD(+) + 4 H(+)(out). Its function is as follows. NDH-1 shuttles electrons from NADH, via FMN and iron-sulfur (Fe-S) centers, to quinones in the respiratory chain. The immediate electron acceptor for the enzyme in this species is believed to be ubiquinone. Couples the redox reaction to proton translocation (for every two electrons transferred, four hydrogen ions are translocated across the cytoplasmic membrane), and thus conserves the redox energy in a proton gradient. The chain is NADH-quinone oxidoreductase subunit K from Thermodesulfovibrio yellowstonii (strain ATCC 51303 / DSM 11347 / YP87).